We begin with the raw amino-acid sequence, 1083 residues long: Ubiquitin-protein ligase E3C (1083 aa).

Composition is skewed to basic and acidic residues over residues 1-10 and 20-40; these read MFSFEGDFKT and SRKEEKASLLHRTQEERRKRE. The tract at residues 1–40 is disordered; it reads MFSFEGDFKTRPKVSLGGASRKEEKASLLHRTQEERRKRE. The tract at residues 1-60 is cis-determinant of acceptor ubiquitin-binding; the sequence is MFSFEGDFKTRPKVSLGGASRKEEKASLLHRTQEERRKREEERRRLKNAIIIQSFIRGYR. The IQ domain maps to 45-74; that stretch reads RLKNAIIIQSFIRGYRDRKQQYSIQRSAFD. Positions 355-385 are disordered; that stretch reads SPASASCHDSASDSEEESEEADKPSSPEDGR. The span at 375–385 shows a compositional bias: basic and acidic residues; it reads ADKPSSPEDGR. The HECT domain occupies 744-1083; sequence NEPDLKKRIR…IECAAGFELS (340 aa). A Glycyl lysine isopeptide (Lys-Gly) (interchain with G-Cter in ubiquitin); by autocatalysis cross-link involves residue K903. C1051 functions as the Glycyl thioester intermediate in the catalytic mechanism.

The protein belongs to the UBE3C family. Interacts with 26S proteasomes. Interacts (via the HECT domain) with UBE2D1 and, less efficiently, with UBE2L3. Post-translationally, autoubiquitinated; promoting its own degradation. Highly expressed in skeletal muscle. Detected at much lower levels in kidney and pancreas.

It catalyses the reaction S-ubiquitinyl-[E2 ubiquitin-conjugating enzyme]-L-cysteine + [acceptor protein]-L-lysine = [E2 ubiquitin-conjugating enzyme]-L-cysteine + N(6)-ubiquitinyl-[acceptor protein]-L-lysine.. It functions in the pathway protein modification; protein ubiquitination. In terms of biological role, E3 ubiquitin-protein ligase that specifically catalyzes 'Lys-29'- and 'Lys-48'-linked polyubiquitin chains. Accepts ubiquitin from the E2 ubiquitin-conjugating enzyme UBE2D1 in the form of a thioester and then directly transfers the ubiquitin to targeted substrates. Associates with the proteasome and promotes elongation of ubiquitin chains on substrates bound to the 26S proteasome. Also catalyzes 'Lys-29'- and 'Lys-48'-linked ubiquitination of 26S proteasome subunit ADRM1/RPN13 in response to proteotoxic stress, impairing the ability of the proteasome to bind and degrade ubiquitin-conjugated proteins. Acts as a negative regulator of autophagy by mediating 'Lys-29'- and 'Lys-48'-linked ubiquitination of PIK3C3/VPS34, promoting its degradation. Can assemble unanchored poly-ubiquitin chains in either 'Lys-29'- or 'Lys-48'-linked polyubiquitin chains; with some preference for 'Lys-48' linkages. Acts as a negative regulator of type I interferon by mediating 'Lys-48'-linked ubiquitination of IRF3 and IRF7, leading to their degradation by the proteasome. Catalyzes ubiquitination and degradation of CAND2. The protein is Ubiquitin-protein ligase E3C of Homo sapiens (Human).